A 431-amino-acid chain; its full sequence is tRNA (adenine(37)-N6)-methyltransferase (431 aa).

The 139-residue stretch at 30-168 (TEPIGYLESC…YIADYDSPQN (139 aa)) folds into the TsaA-like domain. S-adenosyl-L-methionine is bound by residues 47-49 (PRQ), 90-91 (HK), Arg-117, Leu-127, and 148-151 (IHGT). Disordered regions lie at residues 167 to 189 (QNLE…ATAN) and 201 to 243 (KAQP…DRER). Basic and acidic residues predominate over residues 207–243 (STKEKPKCREHRTSDENSQKFRDTSEIQHTLPEDRER).

This sequence belongs to the tRNA methyltransferase O family.

The enzyme catalyses N(6)-L-threonylcarbamoyladenosine(37) in tRNA + S-adenosyl-L-methionine = N(6)-methyl,N(6)-L-threonylcarbamoyladenosine(37) in tRNA + S-adenosyl-L-homocysteine + H(+). Its function is as follows. S-adenosyl-L-methionine-dependent methyltransferase responsible for the addition of the methyl group in the formation of N6-methyl-N6-threonylcarbamoyladenosine at position 37 (m(6)t(6)A37) of the tRNA anticodon loop of tRNA(Ser)(GCU). The methyl group of m(6)t(6)A37 may improve the efficiency of the tRNA decoding ability. May bind to tRNA. This Rattus norvegicus (Rat) protein is tRNA (adenine(37)-N6)-methyltransferase.